Here is a 220-residue protein sequence, read N- to C-terminus: Deoxyribose-phosphate aldolase 2 (220 aa).

Asp89 functions as the Proton donor/acceptor in the catalytic mechanism. Lys151 acts as the Schiff-base intermediate with acetaldehyde in catalysis. Lys180 (proton donor/acceptor) is an active-site residue.

This sequence belongs to the DeoC/FbaB aldolase family. DeoC type 1 subfamily.

It is found in the cytoplasm. It carries out the reaction 2-deoxy-D-ribose 5-phosphate = D-glyceraldehyde 3-phosphate + acetaldehyde. The protein operates within carbohydrate degradation; 2-deoxy-D-ribose 1-phosphate degradation; D-glyceraldehyde 3-phosphate and acetaldehyde from 2-deoxy-alpha-D-ribose 1-phosphate: step 2/2. Functionally, catalyzes a reversible aldol reaction between acetaldehyde and D-glyceraldehyde 3-phosphate to generate 2-deoxy-D-ribose 5-phosphate. This Staphylococcus aureus (strain N315) protein is Deoxyribose-phosphate aldolase 2.